The following is a 924-amino-acid chain: DNA repair and recombination protein RDH54 (924 aa).

Basic and acidic residues predominate over residues 1–10 (MQIPKYENKP). Disordered regions lie at residues 1-21 (MQIP…GSNK) and 155-183 (EALS…NDGG). The span at 168–178 (TTSTTETVPST) shows a compositional bias: low complexity. The 189-residue stretch at 299 to 487 (LENDSDISGC…FTIIDFINPG (189 aa)) folds into the Helicase ATP-binding domain. 346–353 (IPLTGLCK) is an ATP binding site. Residues 472–475 (NDLN) carry the DEGH box motif. Residue Lys615 forms a Glycyl lysine isopeptide (Lys-Gly) (interchain with G-Cter in ubiquitin) linkage. The region spanning 631-790 (KLKVLMTLLE…DSEMRNKESS (160 aa)) is the Helicase C-terminal domain.

This sequence belongs to the SNF2/RAD54 helicase family. Interacts with RAD51 and DMC1.

It localises to the nucleus. The catalysed reaction is ATP + H2O = ADP + phosphate + H(+). Functionally, involved in the recombinational repair of double-strand breaks (DSB) in DNA during mitosis and meiosis. Has DNA dependent ATPase activity. Promotes D-loop (displacement loop) formation with RAD51 recombinase. Modifies the topology of double-stranded DNA during the D-loop reaction to facilitate the invasion of the homologous duplex molecule by the initiating single-stranded DNA substrate. Required for adaptation from G2/M checkpoint arrest induced by a double strand break, by participating in monitoring the extent of single-stranded DNA produced by resection of DNA ends. This role is distinct from its roles in recombination. Promotes colocalization of RAD51 and DMC1 during meiotic recombination. Involved in crossover interference. The protein is DNA repair and recombination protein RDH54 (RDH54) of Saccharomyces cerevisiae (strain JAY291) (Baker's yeast).